The sequence spans 160 residues: Large ribosomal subunit protein uL11 (160 aa).

Belongs to the universal ribosomal protein uL11 family. As to quaternary structure, part of the ribosomal stalk of the 50S ribosomal subunit. Interacts with L10 and the large rRNA to form the base of the stalk. L10 forms an elongated spine to which L12 dimers bind in a sequential fashion forming a multimeric L10(L12)X complex.

Functionally, forms part of the ribosomal stalk which helps the ribosome interact with GTP-bound translation factors. The chain is Large ribosomal subunit protein uL11 from Methanococcus aeolicus (strain ATCC BAA-1280 / DSM 17508 / OCM 812 / Nankai-3).